We begin with the raw amino-acid sequence, 632 residues long: tRNA 5-methylaminomethyl-2-thiouridine biosynthesis bifunctional protein MnmC (632 aa).

Residues 1-247 (MNSRIFPAAM…KWHMTLGQRL (247 aa)) form a tRNA (mnm(5)s(2)U34)-methyltransferase region. Residues 267–632 (VGAGLAGAAV…TDLLAQIAPR (366 aa)) are FAD-dependent cmnm(5)s(2)U34 oxidoreductase.

It in the N-terminal section; belongs to the methyltransferase superfamily. tRNA (mnm(5)s(2)U34)-methyltransferase family. The protein in the C-terminal section; belongs to the DAO family. FAD serves as cofactor.

It is found in the cytoplasm. The catalysed reaction is 5-aminomethyl-2-thiouridine(34) in tRNA + S-adenosyl-L-methionine = 5-methylaminomethyl-2-thiouridine(34) in tRNA + S-adenosyl-L-homocysteine + H(+). Catalyzes the last two steps in the biosynthesis of 5-methylaminomethyl-2-thiouridine (mnm(5)s(2)U) at the wobble position (U34) in tRNA. Catalyzes the FAD-dependent demodification of cmnm(5)s(2)U34 to nm(5)s(2)U34, followed by the transfer of a methyl group from S-adenosyl-L-methionine to nm(5)s(2)U34, to form mnm(5)s(2)U34. This Bordetella bronchiseptica (strain ATCC BAA-588 / NCTC 13252 / RB50) (Alcaligenes bronchisepticus) protein is tRNA 5-methylaminomethyl-2-thiouridine biosynthesis bifunctional protein MnmC.